The chain runs to 192 residues: Fibroblast growth factor 4B (192 aa).

The N-terminal stretch at 1–22 (MTVQLALVPILLLGTAAVMVHC) is a signal peptide.

This sequence belongs to the heparin-binding growth factors family.

The protein resides in the secreted. In terms of biological role, plays an important role in the regulation of embryonic development, cell proliferation, and cell differentiation. Good candidate for an inducing factor with possible roles both in mesoderm induction at the blastula stage and in the formation of the anteroposterior axis at the gastrula stage. This chain is Fibroblast growth factor 4B (fgf4-b), found in Xenopus laevis (African clawed frog).